We begin with the raw amino-acid sequence, 232 residues long: Small ribosomal subunit protein uS3 (232 aa).

In terms of domain architecture, KH type-2 spans 39 to 107 (VRQFLTKELA…PAQINIAEVR (69 aa)).

The protein belongs to the universal ribosomal protein uS3 family. Part of the 30S ribosomal subunit. Forms a tight complex with proteins S10 and S14.

Binds the lower part of the 30S subunit head. Binds mRNA in the 70S ribosome, positioning it for translation. In Yersinia pestis bv. Antiqua (strain Antiqua), this protein is Small ribosomal subunit protein uS3.